A 363-amino-acid chain; its full sequence is 43 kDa protein (363 aa).

This is 43 kDa protein (P43) from Lepidoptera (butterflies and moths).